The primary structure comprises 387 residues: Alkanesulfonate monooxygenase (387 aa).

This sequence belongs to the SsuD family.

The catalysed reaction is an alkanesulfonate + FMNH2 + O2 = an aldehyde + FMN + sulfite + H2O + 2 H(+). In terms of biological role, catalyzes the desulfonation of aliphatic sulfonates. This is Alkanesulfonate monooxygenase from Ralstonia nicotianae (strain ATCC BAA-1114 / GMI1000) (Ralstonia solanacearum).